The following is a 428-amino-acid chain: Adenylosuccinate synthetase (428 aa).

GTP contacts are provided by residues 12 to 18 and 40 to 42; these read GDEGKGK and GHT. Asp-13 serves as the catalytic Proton acceptor. Mg(2+) is bound by residues Asp-13 and Gly-40. IMP is bound by residues 13 to 16, 38 to 41, Thr-128, Arg-142, Gln-223, Thr-238, and Arg-302; these read DEGK and NAGH. His-41 acts as the Proton donor in catalysis. Position 298-304 (298-304) interacts with substrate; sequence TTTGRPR. GTP-binding positions include Arg-304, 330-332, and 412-414; these read SID and SVG.

It belongs to the adenylosuccinate synthetase family. As to quaternary structure, homodimer. Mg(2+) is required as a cofactor.

Its subcellular location is the cytoplasm. It catalyses the reaction IMP + L-aspartate + GTP = N(6)-(1,2-dicarboxyethyl)-AMP + GDP + phosphate + 2 H(+). It functions in the pathway purine metabolism; AMP biosynthesis via de novo pathway; AMP from IMP: step 1/2. Functionally, plays an important role in the de novo pathway of purine nucleotide biosynthesis. Catalyzes the first committed step in the biosynthesis of AMP from IMP. This Geobacillus kaustophilus (strain HTA426) protein is Adenylosuccinate synthetase.